We begin with the raw amino-acid sequence, 206 residues long: Small ribosomal subunit protein eS8 (206 aa).

The tract at residues 1–37 is disordered; that stretch reads MGISRDSRHKRSATGAKRAQFRKKRKFELGRQPANTK.

Belongs to the eukaryotic ribosomal protein eS8 family. As to quaternary structure, component of the small ribosomal subunit. Mature ribosomes consist of a small (40S) and a large (60S) subunit. The 40S subunit contains about 32 different proteins and 1 molecule of RNA (18S). The 60S subunit contains 45 different proteins and 3 molecules of RNA (25S, 5.8S and 5S).

Its subcellular location is the cytoplasm. Component of the ribosome, a large ribonucleoprotein complex responsible for the synthesis of proteins in the cell. The small ribosomal subunit (SSU) binds messenger RNAs (mRNAs) and translates the encoded message by selecting cognate aminoacyl-transfer RNA (tRNA) molecules. The large subunit (LSU) contains the ribosomal catalytic site termed the peptidyl transferase center (PTC), which catalyzes the formation of peptide bonds, thereby polymerizing the amino acids delivered by tRNAs into a polypeptide chain. The nascent polypeptides leave the ribosome through a tunnel in the LSU and interact with protein factors that function in enzymatic processing, targeting, and the membrane insertion of nascent chains at the exit of the ribosomal tunnel. The chain is Small ribosomal subunit protein eS8 (RPS8A) from Candida albicans (strain SC5314 / ATCC MYA-2876) (Yeast).